Consider the following 49-residue polypeptide: Large ribosomal subunit protein uL16 (49 aa).

This sequence belongs to the universal ribosomal protein uL16 family. As to quaternary structure, part of the 50S ribosomal subunit.

In terms of biological role, binds 23S rRNA and is also seen to make contacts with the A and possibly P site tRNAs. The protein is Large ribosomal subunit protein uL16 (rplP) of Aquifex pyrophilus.